The following is a 417-amino-acid chain: Dibenzothiophene monooxygenase (417 aa).

FMN is bound by residues Y96, 129 to 134 (NASSEN), 159 to 163 (KHFCS), R282, 369 to 370 (AR), and H391. Positions 131–142 (SSENNSHVLDWK) are lid loop.

This sequence belongs to the DszC flavin monooxygenase family. Homotetramer. Homodimer. FAD is required as a cofactor. Requires NADH as cofactor.

The protein localises to the cytoplasm. It catalyses the reaction dibenzothiophene + 2 FMNH2 + 2 O2 = dibenzothiophene 5,5-dioxide + 2 FMN + 2 H2O + 2 H(+). The enzyme catalyses dibenzothiophene + FMNH2 + O2 = dibenzothiophene 5-oxide + FMN + H2O + H(+). The catalysed reaction is dibenzothiophene 5-oxide + FMNH2 + O2 = dibenzothiophene 5,5-dioxide + FMN + H2O + H(+). It functions in the pathway sulfur metabolism; dibenzothiophene degradation. Catalyzes the first step of the '4S' desulfurization pathway that removes covalently bound sulfur from dibenzothiophene (DBT) without breaking carbon-carbon bonds. Sulfur dioxygenase which converts DBT to DBT-sulfone (DBTO2 or DBT 5,5-dioxide) in a stepwise manner. In DBTO (dibenzothiophene-5-oxide) was reported not to be a substrate, in it is reported to be a substrate. Can also use benzyl sulfide and benzyl sulfoxide as substrates, although benzyl sulfoxide is a poor substrate. The pathway substrate specificity has been augmented using mutagenesis, however no mutations allowed use of alkylated thiophenes. The chain is Dibenzothiophene monooxygenase from Rhodococcus qingshengii.